Here is a 430-residue protein sequence, read N- to C-terminus: Protein translocase subunit SecY (430 aa).

The next 10 membrane-spanning stretches (helical) occupy residues 18–38 (IFFT…PAPG), 68–88 (FSIF…MQLL), 117–137 (FAII…NNYL), 148–168 (MSYL…LWLG), 179–199 (GISI…LIQF), 215–235 (LQVA…VYVL), 270–290 (VIPV…TMFF), 308–328 (NIGM…YAFV), 368–388 (FVGS…TKFM), and 390–410 (LPQS…VAIE).

The protein belongs to the SecY/SEC61-alpha family. Component of the Sec protein translocase complex. Heterotrimer consisting of SecY, SecE and SecG subunits. The heterotrimers can form oligomers, although 1 heterotrimer is thought to be able to translocate proteins. Interacts with the ribosome. Interacts with SecDF, and other proteins may be involved. Interacts with SecA.

The protein localises to the cell membrane. The central subunit of the protein translocation channel SecYEG. Consists of two halves formed by TMs 1-5 and 6-10. These two domains form a lateral gate at the front which open onto the bilayer between TMs 2 and 7, and are clamped together by SecE at the back. The channel is closed by both a pore ring composed of hydrophobic SecY resides and a short helix (helix 2A) on the extracellular side of the membrane which forms a plug. The plug probably moves laterally to allow the channel to open. The ring and the pore may move independently. In Staphylococcus carnosus (strain TM300), this protein is Protein translocase subunit SecY.